We begin with the raw amino-acid sequence, 89 residues long: RNA-binding protein Hfq (89 aa).

The 60-residue stretch at Asp-9–Leu-68 folds into the Sm domain.

Belongs to the Hfq family. In terms of assembly, homohexamer.

RNA chaperone that binds small regulatory RNA (sRNAs) and mRNAs to facilitate mRNA translational regulation in response to envelope stress, environmental stress and changes in metabolite concentrations. Also binds with high specificity to tRNAs. The protein is RNA-binding protein Hfq of Shewanella denitrificans (strain OS217 / ATCC BAA-1090 / DSM 15013).